The primary structure comprises 250 residues: Indole-3-glycerol phosphate synthase (250 aa).

This sequence belongs to the TrpC family.

It catalyses the reaction 1-(2-carboxyphenylamino)-1-deoxy-D-ribulose 5-phosphate + H(+) = (1S,2R)-1-C-(indol-3-yl)glycerol 3-phosphate + CO2 + H2O. The protein operates within amino-acid biosynthesis; L-tryptophan biosynthesis; L-tryptophan from chorismate: step 4/5. The sequence is that of Indole-3-glycerol phosphate synthase from Bacillus velezensis (strain DSM 23117 / BGSC 10A6 / LMG 26770 / FZB42) (Bacillus amyloliquefaciens subsp. plantarum).